The sequence spans 304 residues: tRNA-uridine aminocarboxypropyltransferase 1 (304 aa).

2 disordered regions span residues Met-1 to Ser-29 and Arg-165 to Thr-193. The span at Arg-180–Thr-193 shows a compositional bias: basic and acidic residues. Residues Asp-206–Trp-209 carry the DXTW motif.

This sequence belongs to the TDD superfamily. DTWD1 family.

The protein localises to the nucleus. It catalyses the reaction a uridine in tRNA + S-adenosyl-L-methionine = a 3-[(3S)-3-amino-3-carboxypropyl]uridine in tRNA + S-methyl-5'-thioadenosine + H(+). Catalyzes the formation of 3-(3-amino-3-carboxypropyl)uridine (acp3U) at position 20 in the D-loop of several cytoplasmic tRNAs (acp3U(20)). This Mus musculus (Mouse) protein is tRNA-uridine aminocarboxypropyltransferase 1.